Reading from the N-terminus, the 381-residue chain is p55-v-Fos-transforming protein (381 aa).

Residues glutamate 137 to histidine 200 enclose the bZIP domain. The basic motif stretch occupies residues lysine 139–arginine 159. A leucine-zipper region spans residues leucine 165–leucine 193.

It belongs to the bZIP family. Fos subfamily.

It is found in the host nucleus. The chain is p55-v-Fos-transforming protein (V-FOS) from Mus musculus (Mouse).